Here is a 68-residue protein sequence, read N- to C-terminus: Large ribosomal subunit protein eL24 (68 aa).

Positions 7, 10, 33, and 37 each coordinate Zn(2+). Residues 7–37 (CDFCGRIIEPGTGKMFVKNDGTILWFCSSKC) form a C4-type zinc finger.

Belongs to the eukaryotic ribosomal protein eL24 family. As to quaternary structure, part of the 50S ribosomal subunit. Forms a cluster with proteins L3 and L14. Requires Zn(2+) as cofactor.

Functionally, binds to the 23S rRNA. This Methanopyrus kandleri (strain AV19 / DSM 6324 / JCM 9639 / NBRC 100938) protein is Large ribosomal subunit protein eL24.